Here is a 220-residue protein sequence, read N- to C-terminus: uncharacterized protein (220 aa).

Residues 165-202 (DKYEDLISDYNKIMEKYREVIKSEIEKYKALSKRKNDI) adopt a coiled-coil conformation.

This is an uncharacterized protein from Pasteurella multocida (strain Pm70).